The chain runs to 464 residues: Glycine receptor subunit alpha-3 (464 aa).

Positions Met1–Ser33 are cleaved as a signal peptide. At Ala34–Tyr255 the chain is on the extracellular side. A glycan (N-linked (GlcNAc...) asparagine) is linked at Asn71. An intrachain disulfide couples Cys171 to Cys185. Zn(2+) is bound by residues Glu225 and Asp227. Residues Cys231 and Cys242 are joined by a disulfide bond. A strychnine-binding site is contributed by Tyr235–Phe240. His248 provides a ligand contact to Zn(2+). The helical transmembrane segment at Tyr256–Ile277 threads the bilayer. The Cytoplasmic segment spans residues Asn278–Ala282. The helical transmembrane segment at Pro283 to Ser303 threads the bilayer. Over Arg304–Lys314 the chain is Extracellular. A helical membrane pass occupies residues Ala315 to Ala335. Over Ala336–Thr430 the chain is Cytoplasmic. The residue at position 370 (Ser370) is a Phosphoserine. The residue at position 379 (Ser379) is a Phosphoserine; by PKA. A helical membrane pass occupies residues Ile431 to Tyr451. Over Lys452–Asp464 the chain is Extracellular.

Belongs to the ligand-gated ion channel (TC 1.A.9) family. Glycine receptor (TC 1.A.9.3) subfamily. GLRA3 sub-subfamily. As to quaternary structure, homopentamer (in vitro). Heteropentamer composed of GLRA3 and GLRB. Both homopentamers and heteropentamers form functional ion channels, but their characteristics are subtly different. Phosphorylated by PKA; this causes down-regulation of channel activity.

It is found in the postsynaptic cell membrane. Its subcellular location is the perikaryon. The protein resides in the cell projection. It localises to the dendrite. The protein localises to the synapse. It is found in the cell membrane. It catalyses the reaction chloride(in) = chloride(out). Low levels of Zn(2+) ions (1 uM) increase glycine sensitivity and decrease the glycine concentration required for half-maximal channel activity. Channel activity is strongly enhanced by ethanol. Inhibited by picrotoxin. Inhibited by prostaglandin E2, probably via PKA-mediated phosphorylation at Ser-379. In terms of biological role, glycine receptors are ligand-gated chloride channels. Channel opening is triggered by extracellular glycine. Channel characteristics depend on the subunit composition; heteropentameric channels display faster channel closure. Plays an important role in the down-regulation of neuronal excitability. Contributes to the generation of inhibitory postsynaptic currents. Contributes to increased pain perception in response to increased prostaglandin E2 levels. Plays a role in cellular responses to ethanol. The sequence is that of Glycine receptor subunit alpha-3 (Glra3) from Rattus norvegicus (Rat).